A 785-amino-acid chain; its full sequence is Peptide transporter family 2 (785 aa).

The next 9 helical transmembrane spans lie at 46–66 (FSFYGMRAVLTLYFFNILNFS), 72–92 (VLFHAFTVICYSSPLLGSILA), 99–119 (FWTIFFISIFYACGQILLAFS), 134–154 (LLGLLIVGLGTGGIKPCVSAF), 167–187 (ISLFFSMFYFSINAGSLISMW), 208–228 (FGIPAILMIVATLVFMAGSFW), 303–323 (VIVMMIPVPMFWALYDQQGST), 345–365 (MGVLNAFLILFFIPIFQSIVY), and 382–402 (AGGGILTAVSFFVCGIVQLFV). An N-linked (GlcNAc...) asparagine glycan is attached at Asn-467. 3 consecutive transmembrane segments (helical) span residues 670 to 690 (ILWQIPQYVILTAGEVLFSIT), 711 to 731 (WLFTTAIGDLIVVVIFMLNIF), and 738 to 758 (MFVFGGIMLFVIFVFILLAVF).

The protein belongs to the major facilitator superfamily. Proton-dependent oligopeptide transporter (POT/PTR) (TC 2.A.17) family. Expressed in vulval, pharyngeal and anal muscles.

The protein localises to the membrane. Functionally, proton-dependent uptake of di- or tripeptides, and to a minor extent tetrapeptides. Transport is independent of sodium and chloride ions. Protein shows high affinity to peptide substrates. The polypeptide is Peptide transporter family 2 (pept-2) (Caenorhabditis elegans).